The chain runs to 345 residues: Mitochondrial metalloendopeptidase OMA1 (345 aa).

Topologically, residues 1-67 (MLRNIIRFKG…ILLDKSSRKY (67 aa)) are mitochondrial matrix. The helical transmembrane segment at 68-88 (LALLFGGCSLFYYTHLDKAPV) threads the bilayer. At 89-345 (SDRSRFIWVS…GNYYKSFFSM (257 aa)) the chain is on the mitochondrial intermembrane side. His203 is a Zn(2+) binding site. Glu204 is a catalytic residue. The Zn(2+) site is built by His207 and Glu257. Residues Cys272 and Cys332 are joined by a disulfide bond. The interval 314–345 (ENMSKWLPKANEIYEQSDCSSMGNYYKSFFSM) is required for protease activation.

This sequence belongs to the peptidase M48 family. In terms of assembly, homooligomer. Requires Zn(2+) as cofactor. Post-translationally, forms a redox-dependent disulfide bond, which plays a structural role and regulates its conformational stability and activity.

Its subcellular location is the mitochondrion inner membrane. Its activity is regulated as follows. Protease activity is induced in response to various mitochondrial stress, such as changes in membrane potential, oxidative stress or chronic hyperpolarization, and depends on its C-terminal region. In terms of biological role, protease that is part of the quality control system in the inner membrane of mitochondria. Activated in response to various mitochondrial stress, leading to the proteolytic cleavage of target proteins, such as OXA1 and COX1. Cleaves and thereby promotes the turnover of mistranslated or misfolded membrane proteins. Cleaves the misfolded multi-pass membrane protein OXA1. Involved in quality control of cytochrome oxidase assembly: mediates the cleavage of COX1 in cells lacking COA2. Required for the stability of the respiratory supercomplexes. Required for TOR signaling. The protein is Mitochondrial metalloendopeptidase OMA1 of Saccharomyces cerevisiae (strain ATCC 204508 / S288c) (Baker's yeast).